The following is a 190-amino-acid chain: Protein GrpE (190 aa).

Positions 1–42 (MNEKDNQTTSEPENEQEIIDVNDSGEQPEENETEQPQEEAVE) are disordered. Over residues 26–42 (EQPEENETEQPQEEAVE) the composition is skewed to acidic residues.

Belongs to the GrpE family. In terms of assembly, homodimer.

It localises to the cytoplasm. In terms of biological role, participates actively in the response to hyperosmotic and heat shock by preventing the aggregation of stress-denatured proteins, in association with DnaK and GrpE. It is the nucleotide exchange factor for DnaK and may function as a thermosensor. Unfolded proteins bind initially to DnaJ; upon interaction with the DnaJ-bound protein, DnaK hydrolyzes its bound ATP, resulting in the formation of a stable complex. GrpE releases ADP from DnaK; ATP binding to DnaK triggers the release of the substrate protein, thus completing the reaction cycle. Several rounds of ATP-dependent interactions between DnaJ, DnaK and GrpE are required for fully efficient folding. The sequence is that of Protein GrpE from Oceanobacillus iheyensis (strain DSM 14371 / CIP 107618 / JCM 11309 / KCTC 3954 / HTE831).